Here is a 107-residue protein sequence, read N- to C-terminus: Large ribosomal subunit protein uL24 (107 aa).

Belongs to the universal ribosomal protein uL24 family. Part of the 50S ribosomal subunit.

Its function is as follows. One of two assembly initiator proteins, it binds directly to the 5'-end of the 23S rRNA, where it nucleates assembly of the 50S subunit. In terms of biological role, one of the proteins that surrounds the polypeptide exit tunnel on the outside of the subunit. The polypeptide is Large ribosomal subunit protein uL24 (Coxiella burnetii (strain Dugway 5J108-111)).